Reading from the N-terminus, the 447-residue chain is NADP-specific glutamate dehydrogenase (447 aa).

3 residues coordinate substrate: K92, Q113, and K116. K128 serves as the catalytic Proton donor. G167 contacts substrate. The NADP(+) site is built by T211 and N242. S380 provides a ligand contact to substrate.

It belongs to the Glu/Leu/Phe/Val dehydrogenases family. In terms of assembly, homohexamer.

The catalysed reaction is L-glutamate + NADP(+) + H2O = 2-oxoglutarate + NH4(+) + NADPH + H(+). Catalyzes the reversible oxidative deamination of glutamate to alpha-ketoglutarate and ammonia. In Salmonella typhi, this protein is NADP-specific glutamate dehydrogenase (gdhA).